The following is a 225-amino-acid chain: Membrane protein (225 aa).

Topologically, residues Met1 to Glu20 are virion surface. N-linked (GlcNAc...) asparagine; by host glycans are attached at residues Asn3 and Asn6. Residues Tyr21–Ala41 traverse the membrane as a helical segment. The Intravirion segment spans residues Thr42–Lys51. Residues Met52–Tyr72 traverse the membrane as a helical segment. Residues Pro73–Gly77 lie on the Virion surface side of the membrane. Residues Gly78–Ile98 form a helical membrane-spanning segment. Topologically, residues Gln99–Thr225 are intravirion.

This sequence belongs to the gammacoronaviruses M protein family. As to quaternary structure, homomultimer. Interacts with envelope E protein in the budding compartment of the host cell, which is located between endoplasmic reticulum and the Golgi complex. Forms a complex with HE and S proteins. Interacts with nucleocapsid N protein. This interaction probably participates in RNA packaging into the virus.

It is found in the virion membrane. The protein localises to the host Golgi apparatus membrane. Its function is as follows. Component of the viral envelope that plays a central role in virus morphogenesis and assembly via its interactions with other viral proteins. This chain is Membrane protein, found in Gallus gallus (Chicken).